We begin with the raw amino-acid sequence, 126 residues long: Histone H2B type 1-P (126 aa).

The disordered stretch occupies residues 1 to 36 (MPEPVKSVPAPKKGSKKAVTKAQKKDGKKRKRSRKE). P2 is subject to N-acetylproline. Position 3 is an ADP-ribosyl glutamic acid (E3). Position 6 is an N6-(2-hydroxyisobutyryl)lysine; alternate (K6). N6-(beta-hydroxybutyryl)lysine; alternate is present on K6. K6 carries the post-translational modification N6-acetyllysine; alternate. K6 carries the post-translational modification N6-butyryllysine; alternate. At K6 the chain carries N6-crotonyllysine; alternate. Position 6 is an N6-lactoyllysine; alternate (K6). K6 participates in a covalent cross-link: Glycyl lysine isopeptide (Lys-Gly) (interchain with G-Cter in SUMO2); alternate. Position 7 is an ADP-ribosylserine (S7). K12 is modified (N6-(beta-hydroxybutyryl)lysine; alternate). N6-acetyllysine; alternate occurs at positions 12 and 13. N6-crotonyllysine; alternate occurs at positions 12 and 13. K12 carries the post-translational modification N6-lactoyllysine; alternate. K13 carries the N6-(2-hydroxyisobutyryl)lysine; alternate modification. Residue S15 is modified to Phosphoserine; by STK4/MST1. Residues K16, K17, K21, and K24 each carry the N6-acetyllysine; alternate modification. N6-crotonyllysine; alternate occurs at positions 16, 17, 21, and 24. N6-lactoyllysine; alternate occurs at positions 16, 17, 21, and 24. K17 is subject to N6-glutaryllysine; alternate. Residues K21 and K24 each carry the N6-(2-hydroxyisobutyryl)lysine; alternate modification. Residue K21 is modified to N6-(beta-hydroxybutyryl)lysine; alternate. N6-butyryllysine; alternate is present on K21. K21 participates in a covalent cross-link: Glycyl lysine isopeptide (Lys-Gly) (interchain with G-Cter in SUMO2); alternate. N6-(2-hydroxyisobutyryl)lysine is present on K25. N6-(2-hydroxyisobutyryl)lysine; alternate is present on K35. Residue K35 is modified to N6-(beta-hydroxybutyryl)lysine; alternate. K35 is modified (N6-crotonyllysine; alternate). K35 carries the N6-glutaryllysine; alternate modification. Position 35 is an N6-succinyllysine; alternate (K35). K35 is covalently cross-linked (Glycyl lysine isopeptide (Lys-Gly) (interchain with G-Cter in ubiquitin); alternate). E36 bears the PolyADP-ribosyl glutamic acid mark. S37 carries the phosphoserine; by AMPK modification. N6-(2-hydroxyisobutyryl)lysine; alternate occurs at positions 44, 47, and 58. At K44 the chain carries N6-lactoyllysine; alternate. K44 and K47 each carry N6-glutaryllysine; alternate. K47 carries the N6-methyllysine; alternate modification. K58 is modified (N6,N6-dimethyllysine; alternate). R80 carries the post-translational modification Dimethylated arginine. K86 carries the N6-(2-hydroxyisobutyryl)lysine; alternate modification. Position 86 is an N6-acetyllysine; alternate (K86). Residue K86 is modified to N6-lactoyllysine; alternate. N6,N6,N6-trimethyllysine; alternate is present on K86. 2 positions are modified to omega-N-methylarginine: R87 and R93. Residue K109 is modified to N6-(2-hydroxyisobutyryl)lysine; alternate. N6-(beta-hydroxybutyryl)lysine; alternate is present on K109. An N6-lactoyllysine; alternate modification is found at K109. N6-glutaryllysine; alternate is present on K109. K109 is subject to N6-methyllysine; alternate. A glycan (O-linked (GlcNAc) serine) is linked at S113. T116 carries the post-translational modification Phosphothreonine. An N6-(2-hydroxyisobutyryl)lysine; alternate mark is found at K117 and K121. K117 is modified (N6-(beta-hydroxybutyryl)lysine; alternate). An N6-lactoyllysine; alternate mark is found at K117 and K121. 2 positions are modified to N6-glutaryllysine; alternate: K117 and K121. N6-succinyllysine; alternate occurs at positions 117 and 121. Residue K117 is modified to N6-methylated lysine; alternate. A Glycyl lysine isopeptide (Lys-Gly) (interchain with G-Cter in ubiquitin); alternate cross-link involves residue K121.

Belongs to the histone H2B family. The nucleosome is a histone octamer containing two molecules each of H2A, H2B, H3 and H4 assembled in one H3-H4 heterotetramer and two H2A-H2B heterodimers. The octamer wraps approximately 147 bp of DNA. Monoubiquitination at Lys-35 (H2BK34Ub) by the MSL1/MSL2 dimer is required for histone H3 'Lys-4' (H3K4me) and 'Lys-79' (H3K79me) methylation and transcription activation at specific gene loci, such as HOXA9 and MEIS1 loci. Similarly, monoubiquitination at Lys-121 (H2BK120Ub) by the RNF20/40 complex gives a specific tag for epigenetic transcriptional activation and is also prerequisite for histone H3 'Lys-4' and 'Lys-79' methylation. It also functions cooperatively with the FACT dimer to stimulate elongation by RNA polymerase II. H2BK120Ub also acts as a regulator of mRNA splicing: deubiquitination by USP49 is required for efficient cotranscriptional splicing of a large set of exons. Post-translationally, phosphorylated on Ser-15 (H2BS14ph) by STK4/MST1 during apoptosis; which facilitates apoptotic chromatin condensation. Also phosphorylated on Ser-15 in response to DNA double strand breaks (DSBs), and in correlation with somatic hypermutation and immunoglobulin class-switch recombination. Phosphorylation at Ser-37 (H2BS36ph) by AMPK in response to stress promotes transcription. In terms of processing, glcNAcylation at Ser-113 promotes monoubiquitination of Lys-121. It fluctuates in response to extracellular glucose, and associates with transcribed genes. ADP-ribosylated by PARP1 or PARP2 on Ser-7 (H2BS6ADPr) in response to DNA damage. H2BS6ADPr promotes recruitment of CHD1L. Mono-ADP-ribosylated on Glu-3 (H2BE2ADPr) by PARP3 in response to single-strand breaks. Poly ADP-ribosylation on Glu-36 (H2BE35ADPr) by PARP1 regulates adipogenesis: it inhibits phosphorylation at Ser-37 (H2BS36ph), thereby blocking expression of pro-adipogenetic genes. Post-translationally, crotonylation (Kcr) is specifically present in male germ cells and marks testis-specific genes in post-meiotic cells, including X-linked genes that escape sex chromosome inactivation in haploid cells. Crotonylation marks active promoters and enhancers and confers resistance to transcriptional repressors. It is also associated with post-meiotically activated genes on autosomes. In terms of processing, hydroxybutyrylation of histones is induced by starvation. Lactylated in macrophages by EP300/P300 by using lactoyl-CoA directly derived from endogenous or exogenous lactate, leading to stimulates gene transcription.

It localises to the nucleus. Its subcellular location is the chromosome. Its function is as follows. Core component of nucleosome. Nucleosomes wrap and compact DNA into chromatin, limiting DNA accessibility to the cellular machineries which require DNA as a template. Histones thereby play a central role in transcription regulation, DNA repair, DNA replication and chromosomal stability. DNA accessibility is regulated via a complex set of post-translational modifications of histones, also called histone code, and nucleosome remodeling. The protein is Histone H2B type 1-P (Hist1h2bp) of Mus musculus (Mouse).